Consider the following 70-residue polypeptide: Protein SlyX homolog (70 aa).

Residues R51 to Y70 form a disordered region.

The protein belongs to the SlyX family.

This chain is Protein SlyX homolog, found in Nitrobacter hamburgensis (strain DSM 10229 / NCIMB 13809 / X14).